The sequence spans 281 residues: MERAGICHSDGFDLAYRIEGEGAPILVIGSAVYYPRLFSSDIKQKYQWVFVDHRGFAKPKRELRAEDSRLDAVLADIERMRTFLQLEDVTILGHSGHAFMALEYARTYPKQVRKVALFNTAPDNSEERQRKSESFFMETASLERKKRFEKDIENLPQDIDKDPERRFVHMCIRAEAKSFYQERPHAAALWDGVFTNMPIIDELWGNTFARIDLLQRLADVRMPVYIGLGRYDYLVAPVSLWDAVDGLYPHVDKVIFEKSGHQPMLEEPEAFDQSFRKWLDQ.

The 239-residue stretch at 30–268 (SAVYYPRLFS…SGHQPMLEEP (239 aa)) folds into the AB hydrolase-1 domain. The active-site Nucleophile is the Ser95. Asp232 is a catalytic residue. His261 (proton donor) is an active-site residue.

Belongs to the AB hydrolase superfamily.

In Bacillus subtilis (strain 168), this protein is AB hydrolase superfamily protein YclE (yclE).